The chain runs to 62 residues: Large ribosomal subunit protein bL28 (62 aa).

Belongs to the bacterial ribosomal protein bL28 family.

This Streptococcus agalactiae serotype Ia (strain ATCC 27591 / A909 / CDC SS700) protein is Large ribosomal subunit protein bL28.